A 310-amino-acid polypeptide reads, in one-letter code: Phosphoribosylaminoimidazole-succinocarboxamide synthase (310 aa).

It belongs to the SAICAR synthetase family.

The enzyme catalyses 5-amino-1-(5-phospho-D-ribosyl)imidazole-4-carboxylate + L-aspartate + ATP = (2S)-2-[5-amino-1-(5-phospho-beta-D-ribosyl)imidazole-4-carboxamido]succinate + ADP + phosphate + 2 H(+). The protein operates within purine metabolism; IMP biosynthesis via de novo pathway; 5-amino-1-(5-phospho-D-ribosyl)imidazole-4-carboxamide from 5-amino-1-(5-phospho-D-ribosyl)imidazole-4-carboxylate: step 1/2. This chain is Phosphoribosylaminoimidazole-succinocarboxamide synthase, found in Cytophaga hutchinsonii (strain ATCC 33406 / DSM 1761 / CIP 103989 / NBRC 15051 / NCIMB 9469 / D465).